The chain runs to 366 residues: Transmembrane protein 26 (366 aa).

A run of 3 helical transmembrane segments spans residues 4-24 (LVLLKALVTRLLFLLHSLVAV), 36-56 (YWLLALLNLLLVLETVLTLKF), and 64-84 (WLSPAIFVYLVNIMPSLWLLE). N-linked (GlcNAc...) asparagine glycosylation is present at Asn-110. 5 helical membrane-spanning segments follow: residues 138–158 (MVCEPVWTLGLHQTLLLILII), 176–196 (ELLLMFVGTAADILEFTTETL), 208–228 (VSGILVVWTWSMLQFPLDLAV), 258–278 (IGLSFFIQDGPFLVVRLVLMI), and 282–302 (VINHMLVFFAVKNSLVMALHF). The span at 319-329 (HPESPKPEHSG) shows a compositional bias: basic and acidic residues. The interval 319 to 366 (HPESPKPEHSGPDQPSESGPSEWEDASPEALPLRTSPVTSEESYPTTP) is disordered. Positions 354 to 366 (SPVTSEESYPTTP) are enriched in polar residues.

It localises to the membrane. The polypeptide is Transmembrane protein 26 (Tmem26) (Mus musculus (Mouse)).